Reading from the N-terminus, the 219-residue chain is Vacuolar protein sorting-associated protein 20 homolog 1 (219 aa).

Positions 20–60 form a coiled coil; it reads SLKTQRRKLGQYQQKLEKVIEAEKQAARDLIREKRKDRALL. Residues 171-219 are disordered; it reads PEVPTKESEESEKLDLPDVPTKTPVASNAEITPAESATKTKVLEEPLPA. Residues 174–186 are compositionally biased toward basic and acidic residues; the sequence is PTKESEESEKLDL. Polar residues predominate over residues 194 to 209; the sequence is PVASNAEITPAESATK.

This sequence belongs to the SNF7 family. In terms of assembly, component of the endosomal sorting required for transport complex III (ESCRT-III), composed at least of VPS2, VPS20, VPS24 and VPS32. Interacts with SKD1.

It localises to the endosome. In terms of biological role, component of the ESCRT-III complex, which is required for multivesicular bodies (MVBs) formation and sorting of endosomal cargo proteins into MVBs. The ESCRT-III complex is probably involved in the concentration of MVB cargo. The chain is Vacuolar protein sorting-associated protein 20 homolog 1 (VPS20.1) from Arabidopsis thaliana (Mouse-ear cress).